A 766-amino-acid chain; its full sequence is Deoxynucleotidyltransferase terminal-interacting protein 2 (766 aa).

The interval M1–D99 is disordered. Polar residues-rich tracts occupy residues N13 to V28 and S42 to E56. The residue at position 127 (T127) is a Phosphothreonine. 3 positions are modified to phosphoserine: S139, S143, and S146. Residues T155 to H175 are disordered. Positions S166 to H175 are enriched in basic and acidic residues. A phosphoserine mark is found at S180 and S190. A Glycyl lysine isopeptide (Lys-Gly) (interchain with G-Cter in SUMO2) cross-link involves residue K217. At T229 the chain carries Phosphothreonine. Phosphoserine is present on residues S236, S248, and S250. K254 participates in a covalent cross-link: Glycyl lysine isopeptide (Lys-Gly) (interchain with G-Cter in SUMO2). S258 is subject to Phosphoserine. K327 participates in a covalent cross-link: Glycyl lysine isopeptide (Lys-Gly) (interchain with G-Cter in SUMO2). S334 carries the post-translational modification Phosphoserine. Disordered stretches follow at residues V345–E367, K390–S450, and K520–N557. Residue K394 forms a Glycyl lysine isopeptide (Lys-Gly) (interchain with G-Cter in SUMO2) linkage. A compositionally biased stretch (basic and acidic residues) spans D421 to T434. A compositionally biased stretch (polar residues) spans K435–T444. Positions L515–F552 form a coiled coil. Acidic residues predominate over residues K520–S542. The tdBR region; mediates interaction with DNTT stretch occupies residues L558–Q615. Residues K568, K594, and K616 each participate in a glycyl lysine isopeptide (Lys-Gly) (interchain with G-Cter in SUMO2) cross-link. Residue T620 is modified to Phosphothreonine. Residues K636, K659, K668, K696, and K741 each participate in a glycyl lysine isopeptide (Lys-Gly) (interchain with G-Cter in SUMO2) cross-link.

In terms of assembly, forms a ternary complex with DNTT and core histone; interaction with PCNA releases DNTT and H2A/H2B histones from this ternary complex. Interacts with ESR1, ESR2, PPARG and RXRA. Part of the small subunit (SSU) processome, composed of more than 70 proteins and the RNA chaperone small nucleolar RNA (snoRNA) U3.

Its subcellular location is the nucleus. The protein resides in the nucleolus. In terms of biological role, regulates the transcriptional activity of DNTT and ESR1. May function as a chromatin remodeling protein. Part of the small subunit (SSU) processome, first precursor of the small eukaryotic ribosomal subunit. During the assembly of the SSU processome in the nucleolus, many ribosome biogenesis factors, an RNA chaperone and ribosomal proteins associate with the nascent pre-rRNA and work in concert to generate RNA folding, modifications, rearrangements and cleavage as well as targeted degradation of pre-ribosomal RNA by the RNA exosome. The protein is Deoxynucleotidyltransferase terminal-interacting protein 2 (DNTTIP2) of Bos taurus (Bovine).